The sequence spans 343 residues: Ribosomal RNA small subunit methyltransferase C (343 aa).

This sequence belongs to the methyltransferase superfamily. RsmC family. As to quaternary structure, monomer.

The protein resides in the cytoplasm. The catalysed reaction is guanosine(1207) in 16S rRNA + S-adenosyl-L-methionine = N(2)-methylguanosine(1207) in 16S rRNA + S-adenosyl-L-homocysteine + H(+). In terms of biological role, specifically methylates the guanine in position 1207 of 16S rRNA in the 30S particle. This chain is Ribosomal RNA small subunit methyltransferase C, found in Escherichia coli (strain ATCC 8739 / DSM 1576 / NBRC 3972 / NCIMB 8545 / WDCM 00012 / Crooks).